The chain runs to 1154 residues: ATP-dependent helicase/deoxyribonuclease subunit B (1154 aa).

Residues 1-284 (MSVRFIIGRS…EQLRHNVRHK (284 aa)) enclose the UvrD-like helicase ATP-binding domain. 8–15 (GRSGSGKT) lines the ATP pocket. The UvrD-like helicase C-terminal domain occupies 279–583 (HNVRHKHEEL…QFSLVPPATD (305 aa)). [4Fe-4S] cluster contacts are provided by Cys799, Cys1120, Cys1123, and Cys1129.

It belongs to the helicase family. AddB/RexB type 1 subfamily. As to quaternary structure, heterodimer of AddA and AddB. The cofactor is Mg(2+). [4Fe-4S] cluster is required as a cofactor.

In terms of biological role, the heterodimer acts as both an ATP-dependent DNA helicase and an ATP-dependent, dual-direction single-stranded exonuclease. Recognizes the chi site generating a DNA molecule suitable for the initiation of homologous recombination. The AddB subunit has 5' -&gt; 3' nuclease activity but not helicase activity. This chain is ATP-dependent helicase/deoxyribonuclease subunit B, found in Anoxybacillus flavithermus (strain DSM 21510 / WK1).